The primary structure comprises 874 residues: Alanine--tRNA ligase (874 aa).

Residues His562, His566, Cys665, and His669 each coordinate Zn(2+).

It belongs to the class-II aminoacyl-tRNA synthetase family. Requires Zn(2+) as cofactor.

Its subcellular location is the cytoplasm. It catalyses the reaction tRNA(Ala) + L-alanine + ATP = L-alanyl-tRNA(Ala) + AMP + diphosphate. Catalyzes the attachment of alanine to tRNA(Ala) in a two-step reaction: alanine is first activated by ATP to form Ala-AMP and then transferred to the acceptor end of tRNA(Ala). Also edits incorrectly charged Ser-tRNA(Ala) and Gly-tRNA(Ala) via its editing domain. This chain is Alanine--tRNA ligase, found in Pseudomonas aeruginosa (strain ATCC 15692 / DSM 22644 / CIP 104116 / JCM 14847 / LMG 12228 / 1C / PRS 101 / PAO1).